A 341-amino-acid polypeptide reads, in one-letter code: Thromboxane A2 receptor (341 aa).

Topologically, residues 1 to 29 (MWLNSTSLGACFRPVNITLQERRAIASPW) are extracellular. Residues Asn-4 and Asn-16 are each glycosylated (N-linked (GlcNAc...) asparagine). The chain crosses the membrane as a helical span at residues 30–52 (FAASFCALGLGSNLLALSVLAGA). Over 53–65 (RPGAGPRSSFLAL) the chain is Cytoplasmic. Residues 66–86 (LCGLVLTDFLGLLVTGAVVAS) form a helical membrane-spanning segment. The Extracellular portion of the chain corresponds to 87–105 (QHAALLDWRATDPGCRLCH). Cysteines 104 and 181 form a disulfide. A helical transmembrane segment spans residues 106–127 (FMGAAMVFFGLCPLLLGAAMAA). At 128–147 (ERFVGITRPFSRPAATSRRA) the chain is on the cytoplasmic side. The helical transmembrane segment at 148–170 (WATVGLVWVGAGTLGLLPLLGLG) threads the bilayer. The Extracellular portion of the chain corresponds to 171-191 (RYSVQYPGSWCFLTLGAERGD). A helical membrane pass occupies residues 192–217 (VAFGLMFALLGSVSVGLSLLLNTVSV). Residues 218–244 (ATLCRVYHAREATQRPRDCEVEMMVQL) lie on the Cytoplasmic side of the membrane. The helical transmembrane segment at 245-268 (VGIMVVATVCWMPLLVFILQTLLQ) threads the bilayer. The Extracellular portion of the chain corresponds to 269–287 (TLPVMSPSGQLLRTTERQL). Residues 288 to 309 (LIYLRVATWNQILDPWVYILFR) traverse the membrane as a helical segment. Residues 310–341 (RSVLRRLHPRFTSQLQAVSLHSPPTQAMLSGP) are Cytoplasmic-facing. Ser-328 carries the phosphoserine modification.

Belongs to the G-protein coupled receptor 1 family. In terms of assembly, interacts with RPGRIP1L. Interacts with RACK1; the interaction regulates TBXA2R cell surface expression. In the brain, expressed in all types of glial cells. In the kidney, expressed in the mesangial cells of the glomerulus, smooth muscle cells of the renal arterioles, and in transitional cell epithelium of renal pelvis.

It localises to the cell membrane. Its function is as follows. Receptor for thromboxane A2 (TXA2), a potent stimulator of platelet aggregation. The activity of this receptor is mediated by a G-protein that activates a phosphatidylinositol-calcium second messenger system. In the kidney, the binding of TXA2 to glomerular TP receptors causes intense vasoconstriction. Activates phospholipase C and adenylyl cyclase. This Rattus norvegicus (Rat) protein is Thromboxane A2 receptor (Tbxa2r).